A 550-amino-acid chain; its full sequence is uncharacterized protein (550 aa).

A signal peptide spans 1 to 13 (MAGALFEPSFAAA). The segment at 312 to 358 (DAQPDPHLSGDEPPSRPLTPETTLFEALTPDPEPDPPATHAPAELIT) is disordered.

This sequence to M.tuberculosis Rv3776.

This is an uncharacterized protein from Mycobacterium tuberculosis (strain CDC 1551 / Oshkosh).